The sequence spans 514 residues: 1-pyrroline-5-carboxylate dehydrogenase (514 aa).

Catalysis depends on residues Glu286 and Cys320.

This sequence belongs to the aldehyde dehydrogenase family. RocA subfamily.

The catalysed reaction is L-glutamate 5-semialdehyde + NAD(+) + H2O = L-glutamate + NADH + 2 H(+). It functions in the pathway amino-acid degradation; L-proline degradation into L-glutamate; L-glutamate from L-proline: step 2/2. The polypeptide is 1-pyrroline-5-carboxylate dehydrogenase (Staphylococcus haemolyticus (strain JCSC1435)).